We begin with the raw amino-acid sequence, 417 residues long: Hyaluronidase-3 (417 aa).

The first 20 residues, 1–20 (MTTQLGPALVLGVALCLGCG), serve as a signal peptide directing secretion. 5 disulfides stabilise this stretch: Cys-42–Cys-331, Cys-205–Cys-220, Cys-356–Cys-367, Cys-361–Cys-395, and Cys-397–Cys-406. Asn-69 is a glycosylation site (N-linked (GlcNAc...) asparagine). The active-site Proton donor is Glu-129. N-linked (GlcNAc...) asparagine glycosylation occurs at Asn-215. The region spanning 352–407 (AAMACSHQRCHGHGRCARRDPGQMEAFLHLWPDGSLGDWKSFSCHCYWGWAGPTCQ) is the EGF-like domain.

The protein belongs to the glycosyl hydrolase 56 family. In terms of processing, N-glycosylated. In terms of tissue distribution, expressed in sperm. Highly expressed in epidermis of the skin, where it is expressed intracellularily in the deep horny layer (at protein level). Bone marrow, testis and kidney.

It is found in the secreted. It localises to the cell membrane. The protein localises to the cytoplasmic vesicle. Its subcellular location is the secretory vesicle. The protein resides in the acrosome. It is found in the endoplasmic reticulum. It localises to the early endosome. The enzyme catalyses Random hydrolysis of (1-&gt;4)-linkages between N-acetyl-beta-D-glucosamine and D-glucuronate residues in hyaluronate.. In terms of biological role, facilitates sperm penetration into the layer of cumulus cells surrounding the egg by digesting hyaluronic acid. Involved in induction of the acrosome reaction in the sperm. Involved in follicular atresia, the breakdown of immature ovarian follicles that are not selected to ovulate. Induces ovarian granulosa cell apoptosis, possibly via apoptotic signaling pathway involving CASP8 and CASP3 activation, and poly(ADP-ribose) polymerase (PARP) cleavage. Has no hyaluronidase activity in embryonic fibroblasts in vitro. Has no hyaluronidase activity in granulosa cells in vitro. This chain is Hyaluronidase-3 (HYAL3), found in Homo sapiens (Human).